Consider the following 1391-residue polypeptide: MAERANLVFHNKVIDGTAIKRLISRLIDHFGMAYTSHILDQVKALGFQQATATSISLGIDDLLTIPSKGWLVQDAEQQSLILEKHHHFGNVHAVEKLRQSIEIWYATSEYLRQEMNPNFRMTDPFNPVHIMSFSGARGNASQVHQLVGMRGLMSDPQGQMIDLPIQSNLREGLSLTEYIISCYGARKGVVDTAVLTSDAGYLTRRLVEVVQHIVVRRTDCGTTRGISVSPQKRTLPERIFIQTLIGRVLADDIYMGPRCIAIRNQDIGLGLVDRFRAFRTQPISIRTPFTCRSTSWICRLCYGRSPTHGDLVELGEAVGIIAGQSIGEPGTQLTLRTFHTGGVFTGGTAEHVRAPFNGKIKFNEDLVHPTRTRHGHPAFLCYRDLYVIIESEDIIHKVTIPPKSFLLVQNDQYVESEQVIAEIRAGTYTLNLKERVRKHIYSDSEGEMHWSTDVYHSPEYTYSNVHLLPKTSHLWILSGGSYKFSVVPFSLHKDQDQINIHYLSAERRYISRFSVNNDQVRHNLFSSDFSDEKEERIYDYSELNRIIGTGHCDFIYSAILHENADLLAKRRRNRFIIPFQLIQDQEKELMLHSHSGISMEIPINGIFRRKGILAFFDDPRYRRKSSGITKYGTLGAHSIVKREDVIEYRGVKKVKPKYQMKVDRFFFIPEEVHILSESSSIMVRNNSIIGVDTPITLNTRSQVGGLVRVERKKKRIELKIFSGNIYFPGERDKISRHSGILIPPGTGKTNSKESKKLKNWIYVQRITPTKKKYFVLVRPVTPYEIPDGLNLATLFPQDPFQEKDNMQLRAVNYILYGNGKPTRRISDTSIQLVRTCLVLSWDQDNKSSFAEEVCASFVEVRTNGLIRDFLRIDLVKSHIFYIRKRNDPSGSELISDNRSDRTNKNPFYSIYSNARIQQSFSQNHGTIHTLLNRNKESQSLIILSASNCFRMGPFNDVKYHNVIKQSIKKDPLIPIKNLLGPLGTAPKIANFYSSFYPLITHNQTSVAKYFELDNLKQAFQVLNYYLIAENGRIYNFDPCRNIFLNAVNLNWYFPHHHYNYCEETSTIISLGQFICENVCIAKSGPRLKSGQVFIVQADSIVIRSAKPYLATPGATVHGHYGETLYEGDTLVTFIYEKSRSGDITQGLPKVEQVLEVRSIDSISMNLEKRIEGWNECITRILGIPWGFVIGAELTIVQSRLSLVNKIQKVYRSQGVQIHNRHIEIIVRQITSKVLVSEDGMSNVFLPGELIGLLRAERTGRALEEAICYRAVLLGITRASLNTQSFISEASFQETARVLAKAALRGRIDWLKGLKENVVLGGMIPAGTGFKGLVHRSRQHNNILLETKKKNFFGGEMRDIFFHHRELFDSCFSNNLHDTSGRSFIGIEFNDS.

The Zn(2+) site is built by Cys220, Cys291, Cys298, and Cys301.

Belongs to the RNA polymerase beta' chain family. RpoC2 subfamily. As to quaternary structure, in plastids the minimal PEP RNA polymerase catalytic core is composed of four subunits: alpha, beta, beta', and beta''. When a (nuclear-encoded) sigma factor is associated with the core the holoenzyme is formed, which can initiate transcription. The cofactor is Zn(2+).

The protein localises to the plastid. Its subcellular location is the chloroplast. The catalysed reaction is RNA(n) + a ribonucleoside 5'-triphosphate = RNA(n+1) + diphosphate. DNA-dependent RNA polymerase catalyzes the transcription of DNA into RNA using the four ribonucleoside triphosphates as substrates. The chain is DNA-directed RNA polymerase subunit beta'' from Gossypium barbadense (Sea Island cotton).